We begin with the raw amino-acid sequence, 172 residues long: Photosystem I assembly protein Ycf3 (172 aa).

TPR repeat units follow at residues 35–70 (AFTY…EIDP), 74–107 (SYIL…NPFL), and 122–155 (GERA…TPGN).

The protein belongs to the Ycf3 family.

The protein localises to the plastid. The protein resides in the chloroplast thylakoid membrane. Essential for the assembly of the photosystem I (PSI) complex. May act as a chaperone-like factor to guide the assembly of the PSI subunits. This is Photosystem I assembly protein Ycf3 from Dioscorea elephantipes (Elephant's foot yam).